The primary structure comprises 272 residues: MHLYKTSTPSTRNGAVDSQVKSNPRNNLIYGQHRCGKGRNARGIITAGHRGGGHKRLYRKIDFRRNEKNIYGRIVTIEYDPNRNAYICLIHYGDGEKRYILHPRGAIIGDTIVSGTEVPIKMGNALPLTDMPLGTAIHNIEITLGKGGQLARAAGAVAKLIAKEGKSATLKLPSGEVRLISKNCSATVGQVGNVGANQKSLGRAGSKCWLGKRPVVRGVVMNPVDHPHGGGEGRAPIGRKKPTTPWGYPALGRRSRKRNKYSDSLILRRRSK.

Residues 1–13 show a composition bias toward polar residues; sequence MHLYKTSTPSTRN. 2 disordered regions span residues 1–27 and 222–272; these read MHLYKTSTPSTRNGAVDSQVKSNPRNN and NPVD…RRSK.

It belongs to the universal ribosomal protein uL2 family. In terms of assembly, part of the 50S ribosomal subunit.

Its subcellular location is the plastid. The protein resides in the chloroplast. This is Large ribosomal subunit protein uL2cz/uL2cy (rpl2-A) from Buxus microphylla (Littleleaf boxwood).